The following is a 294-amino-acid chain: Complement C1q tumor necrosis factor-related protein 2 (294 aa).

A signal peptide spans 1 to 24 (MTIFKKVTTMISWVLLACALPCAA). The disordered stretch occupies residues 42–156 (QLVCSLPGPQ…PGPCSCGSSR (115 aa)). Residues 48-150 (PGPQGPPGPP…KGEPGLPGPC (103 aa)) form the Collagen-like domain. Over residues 50 to 59 (PQGPPGPPGA) the composition is skewed to pro residues. Positions 75–87 (DGQDGQDGDRGDS) are enriched in basic and acidic residues. Positions 105–129 (KGKAGAIGRAGPRGPKGVSGTPGKH) are enriched in low complexity. One can recognise a C1q domain in the interval 154 to 290 (SSRAKSAFSV…GFLIYADQGD (137 aa)).

As to quaternary structure, may interact with ERFE.

The protein localises to the secreted. Functionally, involved in the regulation of lipid metabolism in adipose tissue and liver. The protein is Complement C1q tumor necrosis factor-related protein 2 (C1qtnf2) of Mus musculus (Mouse).